A 427-amino-acid chain; its full sequence is 3-deoxy-D-manno-octulosonic acid transferase (427 aa).

A helical; Signal-anchor transmembrane segment spans residues 4-24 (FFYTSLLLICQPLILCFIGLL). Glu-62 acts as the Proton acceptor in catalysis. CMP-binding positions include 270–271 (PR), 311–313 (MGE), and 337–340 (NPLE).

The protein belongs to the glycosyltransferase group 1 family. Glycosyltransferase 30 subfamily.

Its subcellular location is the cell inner membrane. The catalysed reaction is lipid IVA (E. coli) + CMP-3-deoxy-beta-D-manno-octulosonate = alpha-Kdo-(2-&gt;6)-lipid IVA (E. coli) + CMP + H(+). The protein operates within bacterial outer membrane biogenesis; LPS core biosynthesis. Its function is as follows. Involved in lipopolysaccharide (LPS) biosynthesis. Catalyzes the transfer of a single 3-deoxy-D-manno-octulosonate (Kdo) residue from CMP-Kdo to lipid IV(A), the tetraacyldisaccharide-1,4'-bisphosphate precursor of lipid A. Is strictly monofunctional, i.e. is capable of adding only a single Kdo residue to the acceptor lipid. The chain is 3-deoxy-D-manno-octulosonic acid transferase (waaA) from Haemophilus influenzae (strain ATCC 51907 / DSM 11121 / KW20 / Rd).